A 183-amino-acid polypeptide reads, in one-letter code: NEDD8-conjugating enzyme Ubc12 (183 aa).

Methionine 1 is subject to N-acetylmethionine. The interval 1–28 (MIKLFSLKQQKKEEESAGGTKGSSKKAS) is disordered. In terms of domain architecture, UBC core spans 29–173 (AAQLRIQKDI…VQRSMRGGYI (145 aa)). Cysteine 111 serves as the catalytic Glycyl thioester intermediate.

The protein belongs to the ubiquitin-conjugating enzyme family. UBC12 subfamily. The acetylation of Met-1 increases affinity for DCUN1D1 by about 2 orders of magnitude and is crucial for NEDD8 transfer to cullins.

It catalyses the reaction [E1 NEDD8-activating enzyme]-S-[NEDD8 protein]-yl-L-cysteine + [E2 NEDD8-conjugating enzyme]-L-cysteine = [E1 NEDD8-activating enzyme]-L-cysteine + [E2 NEDD8-conjugating enzyme]-S-[NEDD8-protein]-yl-L-cysteine.. Its pathway is protein modification; protein neddylation. Accepts the ubiquitin-like protein NEDD8 from the UBA3-NAE1 E1 complex and catalyzes its covalent attachment to other proteins. The specific interaction with the E3 ubiquitin ligase rbx1, but not rbx2, suggests that the rbx1-ube2m complex neddylates specific target proteins, such as cul1, cul2, cul3 and cul4. Involved in cell proliferation. This is NEDD8-conjugating enzyme Ubc12 (ube2m) from Xenopus laevis (African clawed frog).